The sequence spans 222 residues: GTP cyclohydrolase 1 (222 aa).

The Zn(2+) site is built by C111, H114, and C182.

Belongs to the GTP cyclohydrolase I family. As to quaternary structure, toroid-shaped homodecamer, composed of two pentamers of five dimers.

The enzyme catalyses GTP + H2O = 7,8-dihydroneopterin 3'-triphosphate + formate + H(+). It functions in the pathway cofactor biosynthesis; 7,8-dihydroneopterin triphosphate biosynthesis; 7,8-dihydroneopterin triphosphate from GTP: step 1/1. In Salmonella choleraesuis (strain SC-B67), this protein is GTP cyclohydrolase 1.